The primary structure comprises 64 residues: Prokaryotic ubiquitin-like protein UBact (64 aa).

Residues 1 to 64 (MFNGEEVILF…SERYRQRTGE (64 aa)) are disordered. Residues 22 to 64 (REIHKDAPAPKRPETKKTGDRLMDRMKKVDPNQSERYRQRTGE) show a composition bias toward basic and acidic residues. Glutamate 64 participates in a covalent cross-link: Isoglutamyl lysine isopeptide (Glu-Lys) (interchain with K-? in acceptor proteins).

It belongs to the ubiquitin-like protein UBact family.

Functionally, may function as a protein modifier covalently attached to lysine residues of substrate proteins. This may serve to target the modified proteins for degradation by proteasomes. This is Prokaryotic ubiquitin-like protein UBact from Leptospirillum ferriphilum (strain ML-04).